The chain runs to 120 residues: NAD(P)H-quinone oxidoreductase subunit 3, chloroplastic (120 aa).

3 helical membrane passes run Ile9–Gly29, Met64–Met84, and Val88–Leu108.

The protein belongs to the complex I subunit 3 family. As to quaternary structure, NDH is composed of at least 16 different subunits, 5 of which are encoded in the nucleus.

It localises to the plastid. The protein localises to the chloroplast thylakoid membrane. The enzyme catalyses a plastoquinone + NADH + (n+1) H(+)(in) = a plastoquinol + NAD(+) + n H(+)(out). It catalyses the reaction a plastoquinone + NADPH + (n+1) H(+)(in) = a plastoquinol + NADP(+) + n H(+)(out). Functionally, NDH shuttles electrons from NAD(P)H:plastoquinone, via FMN and iron-sulfur (Fe-S) centers, to quinones in the photosynthetic chain and possibly in a chloroplast respiratory chain. The immediate electron acceptor for the enzyme in this species is believed to be plastoquinone. Couples the redox reaction to proton translocation, and thus conserves the redox energy in a proton gradient. This Jasminum nudiflorum (Winter jasmine) protein is NAD(P)H-quinone oxidoreductase subunit 3, chloroplastic.